We begin with the raw amino-acid sequence, 300 residues long: Phosphoribosylaminoimidazole-succinocarboxamide synthase (300 aa).

It belongs to the SAICAR synthetase family.

It carries out the reaction 5-amino-1-(5-phospho-D-ribosyl)imidazole-4-carboxylate + L-aspartate + ATP = (2S)-2-[5-amino-1-(5-phospho-beta-D-ribosyl)imidazole-4-carboxamido]succinate + ADP + phosphate + 2 H(+). The protein operates within purine metabolism; IMP biosynthesis via de novo pathway; 5-amino-1-(5-phospho-D-ribosyl)imidazole-4-carboxamide from 5-amino-1-(5-phospho-D-ribosyl)imidazole-4-carboxylate: step 1/2. This Methylibium petroleiphilum (strain ATCC BAA-1232 / LMG 22953 / PM1) protein is Phosphoribosylaminoimidazole-succinocarboxamide synthase.